Consider the following 76-residue polypeptide: Dermaseptin-B4 (76 aa).

Positions 1 to 22 (MAFLKKSLFLVLFLGLVSLSIC) are cleaved as a signal peptide. Positions 23 to 43 (EEEKRENKDEIEQEDDEQSEE) are excised as a propeptide. Residue glutamine 73 is modified to Glutamine amide. A propeptide spanning residues 75–76 (EQ) is cleaved from the precursor.

It belongs to the frog skin active peptide (FSAP) family. Dermaseptin subfamily. As to expression, expressed by the skin glands.

It localises to the secreted. Its function is as follows. Potent antimicrobial peptide with potent activity against Gram-positive and Gram-negative bacteria. Probably acts by disturbing membrane functions with its amphipathic structure. Has an activity of stimulation of insulin release, which may protect the species from being eaten by predators by causing fatal hypoglycemia. Has hemolytic activity. This chain is Dermaseptin-B4, found in Phyllomedusa bicolor (Two-colored leaf frog).